The primary structure comprises 378 residues: Probable endopolygalacturonase NFIA_008150 (378 aa).

Residues 1-19 (MLKLIGSLVLLASAAEVIA) form the signal peptide. A propeptide spanning residues 20 to 35 (SPLAESVAPSITLEKR) is cleaved from the precursor. A disulfide bond links cysteine 38 and cysteine 56. 3 PbH1 repeats span residues 147–169 (TSSSSITNLHILNTPVQAVSING), 170–200 (CDGLTVTDMTIDDSAGDTQGGHNTDAFDIGS), and 201–222 (SSNIIISGAKVYNQDDCVAVNS). Residue aspartate 215 is the Proton donor of the active site. A disulfide bridge connects residues cysteine 217 and cysteine 233. Histidine 237 is an active-site residue. PbH1 repeat units lie at residues 247–273 (RSDNTVENVSFTNSQVTKSDNGLRIKA) and 281–303 (IKGITYSGITLSSIRKYGILIEQ). Residue asparagine 254 is glycosylated (N-linked (GlcNAc...) asparagine). A glycan (N-linked (GlcNAc...) asparagine) is linked at asparagine 327. Disulfide bonds link cysteine 345–cysteine 350 and cysteine 369–cysteine 378.

This sequence belongs to the glycosyl hydrolase 28 family.

It localises to the secreted. It catalyses the reaction (1,4-alpha-D-galacturonosyl)n+m + H2O = (1,4-alpha-D-galacturonosyl)n + (1,4-alpha-D-galacturonosyl)m.. Involved in maceration and soft-rotting of plant tissue. Hydrolyzes the 1,4-alpha glycosidic bonds of de-esterified pectate in the smooth region of the plant cell wall. This is Probable endopolygalacturonase NFIA_008150 from Neosartorya fischeri (strain ATCC 1020 / DSM 3700 / CBS 544.65 / FGSC A1164 / JCM 1740 / NRRL 181 / WB 181) (Aspergillus fischerianus).